The following is a 264-amino-acid chain: Outer kinetochore KNL1 complex subunit sos7 (264 aa).

A coiled-coil region spans residues 90 to 236 (EAEDNEKLET…SNQIKAAIHT (147 aa)).

Belongs to the KRE28 family. In terms of assembly, component of the KNL1/SPC105 complex composed of at least spc7 and sos7. Part of the outer kinetochore KMN network that includes the KNL1, MIS12 and NDC80 complexes. Interacts (via C-terminus) with spc7 (via C-terminus); the interaction is direct.

The protein localises to the nucleus. It is found in the chromosome. The protein resides in the centromere. Its subcellular location is the kinetochore. Functionally, acts as a component of the outer kinetochore KNL1 complex that facilitates microtubule-kinetochore interactions and the spindle assembly checkpoint. Kinetochores, consisting of a centromere-associated inner segment and a microtubule-contacting outer segment, play a crucial role in chromosome segregation by mediating the physical connection between centromeric DNA and spindle microtubules. The outer kinetochore is made up of the ten-subunit KMN network, comprising the MIS12, NDC80 and KNL1 complexes, and auxiliary microtubule-associated components; together they connect the outer kinetochore with the inner kinetochore, bind microtubules, and mediate interactions with mitotic checkpoint proteins that delay anaphase until chromosomes are bioriented on the spindle. In Schizosaccharomyces pombe (strain 972 / ATCC 24843) (Fission yeast), this protein is Outer kinetochore KNL1 complex subunit sos7 (sos7).